The chain runs to 97 residues: Phosphoribosyl-ATP pyrophosphatase (97 aa).

This sequence belongs to the PRA-PH family.

Its subcellular location is the cytoplasm. The catalysed reaction is 1-(5-phospho-beta-D-ribosyl)-ATP + H2O = 1-(5-phospho-beta-D-ribosyl)-5'-AMP + diphosphate + H(+). The protein operates within amino-acid biosynthesis; L-histidine biosynthesis; L-histidine from 5-phospho-alpha-D-ribose 1-diphosphate: step 2/9. The chain is Phosphoribosyl-ATP pyrophosphatase from Methanoculleus marisnigri (strain ATCC 35101 / DSM 1498 / JR1).